A 167-amino-acid chain; its full sequence is ATP synthase subunit b (167 aa).

The helical transmembrane segment at 10–30 (TFFFQLANTLIMFLILKHFLF) threads the bilayer.

This sequence belongs to the ATPase B chain family. F-type ATPases have 2 components, F(1) - the catalytic core - and F(0) - the membrane proton channel. F(1) has five subunits: alpha(3), beta(3), gamma(1), delta(1), epsilon(1). F(0) has three main subunits: a(1), b(2) and c(10-14). The alpha and beta chains form an alternating ring which encloses part of the gamma chain. F(1) is attached to F(0) by a central stalk formed by the gamma and epsilon chains, while a peripheral stalk is formed by the delta and b chains.

Its subcellular location is the cell membrane. Its function is as follows. F(1)F(0) ATP synthase produces ATP from ADP in the presence of a proton or sodium gradient. F-type ATPases consist of two structural domains, F(1) containing the extramembraneous catalytic core and F(0) containing the membrane proton channel, linked together by a central stalk and a peripheral stalk. During catalysis, ATP synthesis in the catalytic domain of F(1) is coupled via a rotary mechanism of the central stalk subunits to proton translocation. In terms of biological role, component of the F(0) channel, it forms part of the peripheral stalk, linking F(1) to F(0). The polypeptide is ATP synthase subunit b (Alkaliphilus oremlandii (strain OhILAs) (Clostridium oremlandii (strain OhILAs))).